The following is a 267-amino-acid chain: Small ribosomal subunit protein uS2 (267 aa).

The segment at 226–267 (AAAPNSASVREEEFSAESADEGKGRRAPAKKGEKKADAPAAE) is disordered. Basic and acidic residues predominate over residues 245–267 (DEGKGRRAPAKKGEKKADAPAAE).

It belongs to the universal ribosomal protein uS2 family.

The polypeptide is Small ribosomal subunit protein uS2 (Xanthomonas oryzae pv. oryzae (strain MAFF 311018)).